A 382-amino-acid polypeptide reads, in one-letter code: Pyruvate dehydrogenase E1 component subunit beta, mitochondrial (382 aa).

A mitochondrion-targeting transit peptide spans 1–46; the sequence is MSRFLRPAFRLATTATRASTIRPTPSSLITKAAAVPTTRLLQKRSY. Glu-112 contacts thiamine diphosphate. Residues Ile-165, Ala-213, Ile-214, Asp-216, and Asn-218 each contribute to the K(+) site.

As to quaternary structure, eukaryotic pyruvate dehydrogenase (PDH) complexes are organized as a core consisting of the oligomeric dihydrolipoamide acetyl-transferase (E2), around which are arranged multiple copies of pyruvate dehydrogenase (E1), dihydrolipoamide dehydrogenase (E3) and protein X (E3BP) bound by non-covalent bonds. The Chaetomium thermophilum PDH complex contains 60 E2 units, 12 E3BP units, about 20 E1 units, and 12 or more E3 units. The units are organized in 1 E2 60-mer, 4 E3BP trimers, about 20 E1 tetramers, and a maximum of 12 E3 dimers. Pyruvate dehydrogenase (E1) is active as a tetramer of 2 alpha and 2 beta subunits. The E3BP trimers are bound inside the icosahedral core with tetrahedral symmetry. It depends on thiamine diphosphate as a cofactor.

It is found in the mitochondrion. The catalysed reaction is N(6)-[(R)-lipoyl]-L-lysyl-[protein] + pyruvate + H(+) = N(6)-[(R)-S(8)-acetyldihydrolipoyl]-L-lysyl-[protein] + CO2. In terms of biological role, the 10-megadalton pyruvate dehydrogenase complex contains multiple copies of three enzymatic components: pyruvate dehydrogenase (E1), dihydrolipoamide acetyltransferase (E2) and lipoamide dehydrogenase (E3) and catalyzes the overall oxidative decarboxylation of pyruvate to form acetyl-CoA and CO(2). Within the complex, pyruvate and thiamine pyrophosphate (TPP or vitamin B1) are bound by pyruvate dehydrogenase E1 subunits alpha and beta and pyruvate is decarboxylated leading to the 2-carbon hydrohyethyl bound to TPP. The E2 component contains covalently-bound lipoyl cofactors and transfers the hydroxyethyl group from TPP to an oxidized form of covalently bound lipoamide, and the resulting acetyl group is then transferred to free coenzyme A to form acetyl-CoA and reduced dihydrolipoamide-E2. Finally, the flavoprotein dihydrolipoamide dehydrogenase (E3) re-oxidizes the lipoyl group of dihydrolipoamide-E2 to form lipoamide-E2 and NADH. A fourth subunit, E3BP, is responsible for tethering E3 in proximity to the core, forming the entire metabolon. This is Pyruvate dehydrogenase E1 component subunit beta, mitochondrial from Chaetomium thermophilum (strain DSM 1495 / CBS 144.50 / IMI 039719) (Thermochaetoides thermophila).